Consider the following 47-residue polypeptide: Lysis protein for colicin E9 (47 aa).

An N-terminal signal peptide occupies residues 1 to 19 (MKKITGIILLLLAAIILAA). The N-palmitoyl cysteine moiety is linked to residue cysteine 20. A lipid anchor (S-diacylglycerol cysteine) is attached at cysteine 20.

It localises to the cell outer membrane. In terms of biological role, lysis proteins are required for both colicin release and partial cell lysis. This Escherichia coli protein is Lysis protein for colicin E9 (lys).